The sequence spans 419 residues: Tryptophan synthase beta chain (419 aa).

Lys113 carries the N6-(pyridoxal phosphate)lysine modification.

This sequence belongs to the TrpB family. Tetramer of two alpha and two beta chains. Requires pyridoxal 5'-phosphate as cofactor.

The enzyme catalyses (1S,2R)-1-C-(indol-3-yl)glycerol 3-phosphate + L-serine = D-glyceraldehyde 3-phosphate + L-tryptophan + H2O. It participates in amino-acid biosynthesis; L-tryptophan biosynthesis; L-tryptophan from chorismate: step 5/5. The beta subunit is responsible for the synthesis of L-tryptophan from indole and L-serine. This Picrophilus torridus (strain ATCC 700027 / DSM 9790 / JCM 10055 / NBRC 100828 / KAW 2/3) protein is Tryptophan synthase beta chain.